We begin with the raw amino-acid sequence, 146 residues long: Myoglobin (146 aa).

The 139-residue stretch at 2–140 (ADLDAVLKCW…VIADLEANYK (139 aa)) folds into the Globin domain. Histidine 59 lines the nitrite pocket. Histidine 59 contacts O2. Position 88 (histidine 88) interacts with heme b.

The protein belongs to the globin family. As to quaternary structure, monomeric.

It localises to the cytoplasm. Its subcellular location is the sarcoplasm. It carries out the reaction Fe(III)-heme b-[protein] + nitric oxide + H2O = Fe(II)-heme b-[protein] + nitrite + 2 H(+). It catalyses the reaction H2O2 + AH2 = A + 2 H2O. In terms of biological role, monomeric heme protein which primary function is to store oxygen and facilitate its diffusion within muscle tissues. Reversibly binds oxygen through a pentacoordinated heme iron and enables its timely and efficient release as needed during periods of heightened demand. Depending on the oxidative conditions of tissues and cells, and in addition to its ability to bind oxygen, it also has a nitrite reductase activity whereby it regulates the production of bioactive nitric oxide. Under stress conditions, like hypoxia and anoxia, it also protects cells against reactive oxygen species thanks to its pseudoperoxidase activity. The polypeptide is Myoglobin (mb) (Katsuwonus pelamis (Skipjack tuna)).